An 87-amino-acid polypeptide reads, in one-letter code: MFVGEIMPMGFGVHYVGSEGVAINPFYDILWMIIFVVIIAVIIYILISPLKKQSSSIDNEKLIKIEKDVEEIKEIVKELKKKWEEIE.

A helical membrane pass occupies residues 29–49; it reads ILWMIIFVVIIAVIIYILISP.

The protein resides in the membrane. This is an uncharacterized protein from Methanocaldococcus jannaschii (strain ATCC 43067 / DSM 2661 / JAL-1 / JCM 10045 / NBRC 100440) (Methanococcus jannaschii).